The following is a 718-amino-acid chain: Homeobox-leucine zipper protein HDG9 (718 aa).

Basic and acidic residues predominate over residues 1-12 (MDFTRDDNSSDE). The interval 1 to 35 (MDFTRDDNSSDERENDVDANTNNRHEKKGYHRHTN) is disordered. The homeobox DNA-binding region spans 26 to 85 (EKKGYHRHTNEQIHRLETYFKECPHPDEFQRRLLGEELNLKPKQIKFWFQNKRTQAKSHN). The stretch at 78–152 (RTQAKSHNEK…LKDEYERVSN (75 aa)) forms a coiled coil. The disordered stretch occupies residues 169–209 (PYLHGPSNHASTSKNRPALYGTSSNRLPEPSSIFRGPYTRG). Polar residues predominate over residues 176–194 (NHASTSKNRPALYGTSSNR). Residues 232-464 (SQLEKIAMLE…LERTCERLIF (233 aa)) form the START domain.

Belongs to the HD-ZIP homeobox family. Class IV subfamily. In terms of tissue distribution, expressed in anthers with highest levels in the tapetum and pollen grains, and chalazal end of the embryo sac.

It is found in the nucleus. Probable transcription factor that binds to the DNA sequence 5'-GCATTAAATGCGCA-3'. The chain is Homeobox-leucine zipper protein HDG9 (HDG9) from Arabidopsis thaliana (Mouse-ear cress).